The sequence spans 100 residues: Large ribosomal subunit protein uL23 (100 aa).

It belongs to the universal ribosomal protein uL23 family. In terms of assembly, part of the 50S ribosomal subunit. Contacts protein L29, and trigger factor when it is bound to the ribosome.

One of the early assembly proteins it binds 23S rRNA. One of the proteins that surrounds the polypeptide exit tunnel on the outside of the ribosome. Forms the main docking site for trigger factor binding to the ribosome. The protein is Large ribosomal subunit protein uL23 of Shewanella amazonensis (strain ATCC BAA-1098 / SB2B).